Reading from the N-terminus, the 355-residue chain is S-adenosylmethionine:tRNA ribosyltransferase-isomerase (355 aa).

It belongs to the QueA family. In terms of assembly, monomer.

The protein localises to the cytoplasm. It catalyses the reaction 7-aminomethyl-7-carbaguanosine(34) in tRNA + S-adenosyl-L-methionine = epoxyqueuosine(34) in tRNA + adenine + L-methionine + 2 H(+). The protein operates within tRNA modification; tRNA-queuosine biosynthesis. Its function is as follows. Transfers and isomerizes the ribose moiety from AdoMet to the 7-aminomethyl group of 7-deazaguanine (preQ1-tRNA) to give epoxyqueuosine (oQ-tRNA). The sequence is that of S-adenosylmethionine:tRNA ribosyltransferase-isomerase from Photorhabdus laumondii subsp. laumondii (strain DSM 15139 / CIP 105565 / TT01) (Photorhabdus luminescens subsp. laumondii).